A 261-amino-acid polypeptide reads, in one-letter code: 5'-nucleotidase SurE (261 aa).

A divalent metal cation is bound by residues aspartate 8, aspartate 9, serine 43, and asparagine 96.

It belongs to the SurE nucleotidase family. A divalent metal cation is required as a cofactor.

The protein localises to the cytoplasm. The catalysed reaction is a ribonucleoside 5'-phosphate + H2O = a ribonucleoside + phosphate. Its function is as follows. Nucleotidase that shows phosphatase activity on nucleoside 5'-monophosphates. The protein is 5'-nucleotidase SurE of Cereibacter sphaeroides (strain ATCC 17025 / ATH 2.4.3) (Rhodobacter sphaeroides).